We begin with the raw amino-acid sequence, 495 residues long: Putative aldehyde dehydrogenase AldA (495 aa).

212-218 (GKGSESG) provides a ligand contact to NAD(+). Catalysis depends on residues Glu256 and Cys290.

The protein belongs to the aldehyde dehydrogenase family.

It carries out the reaction an aldehyde + NAD(+) + H2O = a carboxylate + NADH + 2 H(+). This is Putative aldehyde dehydrogenase AldA (aldA) from Staphylococcus aureus (strain USA300).